A 190-amino-acid chain; its full sequence is Large ribosomal subunit protein bL25 (190 aa).

The protein belongs to the bacterial ribosomal protein bL25 family. CTC subfamily. In terms of assembly, part of the 50S ribosomal subunit; part of the 5S rRNA/L5/L18/L25 subcomplex. Contacts the 5S rRNA. Binds to the 5S rRNA independently of L5 and L18.

Functionally, this is one of the proteins that binds to the 5S RNA in the ribosome where it forms part of the central protuberance. This Neisseria meningitidis serogroup A / serotype 4A (strain DSM 15465 / Z2491) protein is Large ribosomal subunit protein bL25.